A 323-amino-acid polypeptide reads, in one-letter code: Voltage-dependent calcium channel gamma-2 subunit (323 aa).

The helical transmembrane segment at 10–30 threads the bilayer; sequence MLLTTVGAFAAFSLMTIAVGT. An N-linked (GlcNAc...) asparagine glycan is attached at N48. 3 helical membrane passes run 104-124, 134-154, and 182-202; these read SSIF…CIAA, IILS…IGII, and FGAL…HMFI. The segment at 233–261 is disordered; it reads YQRRSRSSSRSTEPSHSRDASPVGVKGFN. S253 carries the phosphoserine modification. Y271 carries the phosphotyrosine modification. T321 carries the post-translational modification Phosphothreonine; by PKA.

The protein belongs to the PMP-22/EMP/MP20 family. CACNG subfamily. The L-type calcium channel is composed of five subunits: alpha-1, alpha-2/delta, beta and gamma. Interacts with the PDZ domains of DLG4/PSD-95 and DLG1/SAP97. May interact with GOPC. Acts as an auxiliary subunit for AMPA-selective glutamate receptors (AMPARs). Found in a complex with GRIA1, GRIA2, GRIA3, GRIA4, CNIH2, CNIH3, CACNG3, CACNG4, CACNG5, CACNG7 and CACNG8. Interacts with GRIA1 and GRIA2. Interacts with MPP2. In terms of processing, phosphorylation of Thr-321 by PKA impairs interaction with DLG1 and DLG4. In terms of tissue distribution, brain.

It is found in the membrane. It localises to the synapse. The protein resides in the synaptosome. In terms of biological role, regulates the trafficking and gating properties of AMPA-selective glutamate receptors (AMPARs). Promotes their targeting to the cell membrane and synapses and modulates their gating properties by slowing their rates of activation, deactivation and desensitization. Does not show subunit-specific AMPA receptor regulation and regulates all AMPAR subunits. Thought to stabilize the calcium channel in an inactivated (closed) state. In Mus musculus (Mouse), this protein is Voltage-dependent calcium channel gamma-2 subunit (Cacng2).